The following is a 65-amino-acid chain: UPF0337 protein gbs1203 (65 aa).

A compositionally biased stretch (basic and acidic residues) spans M1 to K12. Residues M1 to E29 form a disordered region.

It belongs to the UPF0337 (CsbD) family.

This chain is UPF0337 protein gbs1203, found in Streptococcus agalactiae serotype III (strain NEM316).